The sequence spans 369 residues: Deoxyhypusine synthase (369 aa).

Residues 105–109 (SNLIS), 131–133 (TAG), Glu137, and Asp238 each bind NAD(+). 136–137 (EE) provides a ligand contact to spermidine. Asp243 serves as a coordination point for spermidine. Gly283 serves as a coordination point for NAD(+). His288 is a binding site for spermidine. Position 308 to 309 (308 to 309 (TA)) interacts with NAD(+). Spermidine contacts are provided by residues 314 to 316 (GSD) and 323 to 329 (EAVSWGK). The Nucleophile role is filled by Lys329. An NAD(+)-binding site is contributed by 342 to 343 (DA).

The protein belongs to the deoxyhypusine synthase family. It depends on NAD(+) as a cofactor.

It catalyses the reaction [eIF5A protein]-L-lysine + spermidine = [eIF5A protein]-deoxyhypusine + propane-1,3-diamine. It participates in protein modification; eIF5A hypusination. Functionally, catalyzes the NAD-dependent oxidative cleavage of spermidine and the subsequent transfer of the butylamine moiety of spermidine to the epsilon-amino group of a critical lysine residue of the eIF-5A precursor protein to form the intermediate deoxyhypusine residue. This is the first step of the post-translational modification of that lysine into an unusual amino acid residue named hypusine. Hypusination is unique to mature eIF-5A factor and is essential for its function. The protein is Deoxyhypusine synthase (Dhps) of Rattus norvegicus (Rat).